The primary structure comprises 309 residues: Syndecan-1 (309 aa).

Residues 1–22 form the signal peptide; that stretch reads MRRAALWLWLCALALRLQPVLP. At 24–253 the chain is on the extracellular side; that stretch reads IMAVNVPPED…GLLDRKEVLG (230 aa). Disordered regions lie at residues 28-57 and 142-185; these read NVPP…DITL and ARAT…GGTS. Positions 32 to 42 are enriched in acidic residues; sequence EDQDGSGDDSD. The O-linked (Xyl...) (chondroitin sulfate) serine glycan is linked to S37. Residue N43 is glycosylated (N-linked (GlcNAc...) asparagine). 2 O-linked (Xyl...) (heparan sulfate) serine glycosylation sites follow: S45 and S47. The span at 142 to 151 shows a compositional bias: polar residues; sequence ARATTAQAPV. O-linked (Xyl...) (chondroitin sulfate) serine glycosylation is found at S205 and S215. The chain crosses the membrane as a helical span at residues 254–274; the sequence is GVIAGGLVGLIFAVCLVGFML. The Cytoplasmic portion of the chain corresponds to 275-309; that stretch reads YRMKKKDEGSYSLEEPKQANGGAYQKPTKQEEFYA. The disordered stretch occupies residues 283 to 309; sequence GSYSLEEPKQANGGAYQKPTKQEEFYA. The residue at position 284 (S284) is a Phosphoserine.

The protein belongs to the syndecan proteoglycan family. Interacts with CDCP1. Interacts (via C-terminus) with TIAM1 (via PDZ domain). Interacts with MDK. Post-translationally, shedding is enhanced by a number of factors such as heparanase, thrombin or EGF. Also by stress and wound healing. PMA-mediated shedding is inhibited by TIMP3.

It localises to the membrane. The protein resides in the secreted. The protein localises to the extracellular exosome. In terms of biological role, cell surface proteoglycan that contains both heparan sulfate and chondroitin sulfate and that links the cytoskeleton to the interstitial matrix. Regulates exosome biogenesis in concert with SDCBP and PDCD6IP. Able to induce its own expression in dental mesenchymal cells and also in the neighboring dental epithelial cells via an MSX1-mediated pathway. This Cricetulus griseus (Chinese hamster) protein is Syndecan-1.